A 955-amino-acid chain; its full sequence is E3 ubiquitin-protein ligase MIB2 (955 aa).

An N-acetylmethionine modification is found at Met-1. The 80-residue stretch at 1 to 80 (MDPDPQAGVQ…AHDLLLYDNA (80 aa)) folds into the MIB/HERC2 1 domain. The ZZ-type zinc-finger motif lies at 86–138 (HPNIICDCCKKHGLRGMRWKCRVCLDYDLCTQCYMHNKHELAHAFDRYETAHS). Positions 91, 94, 106, 109, 115, 118, 124, and 128 each coordinate Zn(2+). In terms of domain architecture, MIB/HERC2 2 spans 149–227 (LPRIPLRGIF…KVDLKCVGEA (79 aa)). Ser-251 is modified (phosphoserine). ANK repeat units lie at residues 464-493 (QGRT…GVDL), 497-526 (EGNT…RADA), 530-559 (TQST…DVNL), 563-595 (HSDT…DVTA), 599-628 (QGFT…QLVD), 633-663 (DGFT…DVNV), 667-696 (KLQS…SVNA), 700-728 (EGDT…DPGP), and 769-798 (RGRS…ERQA). 2 consecutive RING-type zinc fingers follow at residues 832-867 (CLVC…IRCQ) and 911-944 (CPIC…PICR).

In terms of assembly, interacts with actin monomer. Ubiquitinated. Possibly via autoubiquitination. Expressed in skeletal muscle, and to a lesser extent in heart, brain and kidney.

Its subcellular location is the cytoplasm. It is found in the endosome. It carries out the reaction S-ubiquitinyl-[E2 ubiquitin-conjugating enzyme]-L-cysteine + [acceptor protein]-L-lysine = [E2 ubiquitin-conjugating enzyme]-L-cysteine + N(6)-ubiquitinyl-[acceptor protein]-L-lysine.. It functions in the pathway protein modification; protein ubiquitination. Functionally, E3 ubiquitin-protein ligase that mediates ubiquitination of Delta receptors, which act as ligands of Notch proteins. Positively regulates the Delta-mediated Notch signaling by ubiquitinating the intracellular domain of Delta, leading to endocytosis of Delta receptors. This chain is E3 ubiquitin-protein ligase MIB2, found in Homo sapiens (Human).